A 240-amino-acid chain; its full sequence is Myogenic factor 6 (240 aa).

Residues 91–142 (DRRKAATLRERRRLKKINEAFEALKRRTVANPNQRLPKVEILRSAINYIERL) form the bHLH domain.

In terms of assembly, efficient DNA binding requires dimerization with another bHLH protein. Skeletal muscle.

The protein localises to the nucleus. Its function is as follows. Involved in muscle differentiation (myogenic factor). Induces fibroblasts to differentiate into myoblasts. Probable sequence specific DNA-binding protein. This Xenopus laevis (African clawed frog) protein is Myogenic factor 6 (myf6).